The chain runs to 400 residues: Canavanine gamma-lyase (400 aa).

K213 bears the N6-(pyridoxal phosphate)lysine mark.

It belongs to the trans-sulfuration enzymes family. The cofactor is pyridoxal 5'-phosphate.

It catalyses the reaction L-canavanine + H2O = N-hydroxyguanidine + L-homoserine. Lyase involved in the degradation of canavanine, the delta-oxa-analog of arginine, allowing growth on canavanine as sole nitrogen and carbon source. Catalyzes the elimination of hydroxyguanidine from canavanine with a subsequent water addition to yield homoserine. Is highly specific for canavanine and cannot use methionine, cystathionine or arginine. In Pseudomonas canavaninivorans, this protein is Canavanine gamma-lyase.